Consider the following 397-residue polypeptide: Ubiquitin-like modifier-activating enzyme 5 (397 aa).

ATP contacts are provided by Gly76, Asp97, Lys120, Asn143, and Asn177. Residues Cys219 and Cys222 each coordinate Zn(2+). The active-site Glycyl thioester intermediate is the Cys243. Zn(2+) contacts are provided by Cys296 and Cys301. The interval 362-384 (LAYEPPASTKHSETTSTTAVSDD) is disordered. Residues 375–384 (TTSTTAVSDD) show a composition bias toward low complexity.

The protein belongs to the ubiquitin-activating E1 family. UBA5 subfamily.

In terms of biological role, E1-like enzyme which activates UFM1. The sequence is that of Ubiquitin-like modifier-activating enzyme 5 from Aedes aegypti (Yellowfever mosquito).